Consider the following 287-residue polypeptide: Large ribosomal subunit protein uL2 (287 aa).

The interval 221 to 287 is disordered; it reads RGSVMNPCDH…SKRSRGGRDS (67 aa). Positions 258–287 are enriched in basic residues; sequence KTRKKNKPSNKLVVRRRRRISKRSRGGRDS.

It belongs to the universal ribosomal protein uL2 family. In terms of assembly, part of the 50S ribosomal subunit. Forms a bridge to the 30S subunit in the 70S ribosome.

Functionally, one of the primary rRNA binding proteins. Required for association of the 30S and 50S subunits to form the 70S ribosome, for tRNA binding and peptide bond formation. It has been suggested to have peptidyltransferase activity; this is somewhat controversial. Makes several contacts with the 16S rRNA in the 70S ribosome. The sequence is that of Large ribosomal subunit protein uL2 from Prochlorococcus marinus (strain MIT 9215).